A 229-amino-acid chain; its full sequence is Large ribosomal subunit protein uL1 (229 aa).

The protein belongs to the universal ribosomal protein uL1 family. As to quaternary structure, part of the 50S ribosomal subunit.

Its function is as follows. Binds directly to 23S rRNA. The L1 stalk is quite mobile in the ribosome, and is involved in E site tRNA release. Functionally, protein L1 is also a translational repressor protein, it controls the translation of the L11 operon by binding to its mRNA. The polypeptide is Large ribosomal subunit protein uL1 (Streptococcus pneumoniae (strain ATCC 700669 / Spain 23F-1)).